The chain runs to 216 residues: Heart- and neural crest derivatives-expressed protein 1 (216 aa).

Disordered stretches follow at residues Met-1 to His-20, Ala-53 to Ser-109, and Glu-165 to Thr-203. Over residues Ala-8–Pro-18 the composition is skewed to basic residues. Residues Thr-65–Pro-78 are compositionally biased toward low complexity. The span at Leu-92 to Arg-104 shows a compositional bias: basic residues. One can recognise a bHLH domain in the interval Lys-94–Leu-146. A Phosphothreonine; by PLK4 modification is found at Thr-107. At Ser-109 the chain carries Phosphoserine; by PLK4. Over residues Glu-165–Glu-174 the composition is skewed to basic and acidic residues.

Efficient DNA binding requires dimerization with another bHLH protein. Forms homodimers and heterodimers with TCF3 gene products E12 and E47, HAND2 and HEY1, HEY2 and HEYL (hairy-related transcription factors). Interacts with MDFIC. Interacts with SOX15; the interaction enhances HAND1-induced differentiation of trophoblast giant cells. In terms of processing, phosphorylation by PLK4 disrupts the interaction with MDFIC and leads to translocation into the nucleoplasm, allowing dimerization and transcription factor activity. As to expression, smooth muscle cells of the gut and adrenal tissue.

Its subcellular location is the nucleus. The protein localises to the nucleoplasm. The protein resides in the nucleolus. Functionally, transcription factor that plays an essential role in both trophoblast giant cell differentiation and in cardiac morphogenesis. Binds the DNA sequence 5'-NRTCTG-3' (non-canonical E-box). Acts as a transcriptional repressor of SOX15. In the adult, could be required for ongoing expression of cardiac-specific genes. This Mus musculus (Mouse) protein is Heart- and neural crest derivatives-expressed protein 1 (Hand1).